Reading from the N-terminus, the 139-residue chain is Mitochondrial intermembrane space import and assembly protein 40 (139 aa).

3 disulfides stabilise this stretch: Cys-53/Cys-55, Cys-64/Cys-97, and Cys-74/Cys-87. Residues 61-105 (SGPCGEQFKSAFSCFHYSTEDIKGSDCIDQFRAMQECMQKYPDLY) form the CHCH domain. 2 consecutive short sequence motifs (cx9C motif) follow at residues 64 to 74 (CGEQFKSAFSC) and 87 to 97 (CIDQFRAMQEC). The segment at 102-139 (PDLYPQDEEEEEEAKPVEPVEETADTKVSAAKEQGTSS) is disordered. Positions 106–124 (PQDEEEEEEAKPVEPVEET) are enriched in acidic residues.

Monomer. Can form homooligomers. Interacts with GFER and forms transient disulfide bonds with GFER. Interacts with MICU1. Interacts with COX19 forming transient intermolecular disulfide bridges. Interacts with COA7 through transient intermolecular disulfide bonds. Interacts with AIFM1; the interaction increases in presence of NADH. Interacts with NDUFB10. Post-translationally, forms intrachain disulfide bridges, but exists in different redox states. Widely expressed. Present at high level in liver and kidney, followed by lung, brain, heart and spleen (at protein level).

The protein resides in the mitochondrion intermembrane space. Central component of a redox-sensitive mitochondrial intermembrane space import machinery which is required for the biogenesis of respiratory chain complexes. Functions as chaperone and catalyzes the formation of disulfide bonds in substrate proteins, such as COX17, COX19, MICU1 and COA7. Required for the import and folding of small cysteine-containing proteins (small Tim) in the mitochondrial intermembrane space (IMS). Required for the import of COA7 in the IMS. Precursor proteins to be imported into the IMS are translocated in their reduced form into the mitochondria. The oxidized form of CHCHD4/MIA40 forms a transient intermolecular disulfide bridge with the reduced precursor protein, resulting in oxidation of the precursor protein that now contains an intramolecular disulfide bond and is able to undergo folding in the IMS. Reduced CHCHD4/MIA40 is then reoxidized by GFER/ERV1 via a disulfide relay system. Mediates formation of disulfide bond in MICU1 in the IMS, promoting formation of the MICU1-MICU2 heterodimer that regulates mitochondrial calcium uptake. In Mus musculus (Mouse), this protein is Mitochondrial intermembrane space import and assembly protein 40 (Chchd4).